Here is a 486-residue protein sequence, read N- to C-terminus: Putative protease Do-like 13 (486 aa).

Residues 44 to 229 are serine protease; it reads KINTFSSKPN…IPAPVVKHFI (186 aa). Catalysis depends on charge relay system residues histidine 83, aspartate 114, and serine 192. The PDZ domain maps to 241–334; that stretch reads FCSLNLSYQH…TILLKILREG (94 aa).

This sequence belongs to the peptidase S1C family.

In terms of biological role, putative serine protease. This Arabidopsis thaliana (Mouse-ear cress) protein is Putative protease Do-like 13 (DEGP13).